The sequence spans 603 residues: ATP-dependent RNA helicase MRH4, mitochondrial (603 aa).

The N-terminal 71 residues, 1 to 71 (MISTGLPLFT…GNGAGAGARV (71 aa)), are a transit peptide targeting the mitochondrion. The Q motif signature appears at 151-158 (VIKPTPVQ). The region spanning 193–409 (KNEEQKTKIF…LRLFPDQKSL (217 aa)) is the Helicase ATP-binding domain. 206 to 213 (AETGSGKT) serves as a coordination point for ATP. The short motif at 357-360 (DEAD) is the DEAD box element. The Helicase C-terminal domain occupies 443–603 (CLAQAIYAIS…SAIMKGSRIG (161 aa)).

Belongs to the DEAD box helicase family. MRH4 subfamily.

It localises to the mitochondrion. The catalysed reaction is ATP + H2O = ADP + phosphate + H(+). In terms of biological role, ATP-binding RNA helicase involved in mitochondrial RNA metabolism. Required for maintenance of mitochondrial DNA. The protein is ATP-dependent RNA helicase MRH4, mitochondrial (MRH4) of Lodderomyces elongisporus (strain ATCC 11503 / CBS 2605 / JCM 1781 / NBRC 1676 / NRRL YB-4239) (Yeast).